Consider the following 138-residue polypeptide: Ribosome maturation factor RimP (138 aa).

The protein belongs to the RimP family.

It localises to the cytoplasm. Required for maturation of 30S ribosomal subunits. The protein is Ribosome maturation factor RimP of Campylobacter curvus (strain 525.92).